The sequence spans 141 residues: Large ribosomal subunit protein uL11 (141 aa).

It belongs to the universal ribosomal protein uL11 family. Part of the ribosomal stalk of the 50S ribosomal subunit. Interacts with L10 and the large rRNA to form the base of the stalk. L10 forms an elongated spine to which L12 dimers bind in a sequential fashion forming a multimeric L10(L12)X complex. Post-translationally, one or more lysine residues are methylated.

In terms of biological role, forms part of the ribosomal stalk which helps the ribosome interact with GTP-bound translation factors. This Streptococcus uberis (strain ATCC BAA-854 / 0140J) protein is Large ribosomal subunit protein uL11.